Here is a 33-residue protein sequence, read N- to C-terminus: Brevinin-2JD (33 aa).

Cysteines 27 and 33 form a disulfide.

In terms of tissue distribution, expressed by the skin glands.

It is found in the secreted. Has antibacterial activity against E.coli ATCC 25992 (MIC=38 uM), E.coli CIB 84492 (MIC=38 uM), S.aureus ATCC 25923 (MIC=19 uM) and S.aureus CIB 85462 (MIC=19 uM). Has antifungal activity against C.albicans (MIC=19 uM). Has weak hemolytic activity against rabbit erythrocytes. In Odorrana jingdongensis (Jingdong frog), this protein is Brevinin-2JD.